A 578-amino-acid polypeptide reads, in one-letter code: Transmembrane protein 121B (578 aa).

Disordered regions lie at residues 1–84 (MRPA…ESLS) and 106–129 (AGPAPVAFSSSAATSSSTSTPTSS). 2 stretches are compositionally biased toward low complexity: residues 8–17 (PRSVSSASGS) and 44–53 (GDSSTSTSTS). Positions 54–67 (RGGGGGRRGGGGGS) are enriched in gly residues. Serine 167 is modified (phosphoserine). The tract at residues 529-557 (RARGGYGAPPSAPPPPPPPPQGGSQLGHC) is disordered. Pro residues predominate over residues 538–549 (PSAPPPPPPPPQ). Residue serine 552 is modified to Phosphoserine.

It belongs to the TMEM121 family. In terms of tissue distribution, widely expressed, especially in adult heart, brain, prostate, testes, peripherical blood leukocytes and fetal brain.

This Homo sapiens (Human) protein is Transmembrane protein 121B.